We begin with the raw amino-acid sequence, 633 residues long: Putative ankyrin repeat protein L774 (633 aa).

ANK repeat units lie at residues 91 to 120 (IYGH…EYDP), 123 to 152 (NCDD…FFKI), 221 to 250 (NVNK…EYDF), 252 to 275 (TILK…ILDS), 338 to 367 (DYDV…DVNN), 369 to 393 (MTYA…TLST), and 517 to 546 (DNLK…NSND).

The sequence is that of Putative ankyrin repeat protein L774 from Acanthamoeba polyphaga mimivirus (APMV).